Reading from the N-terminus, the 372-residue chain is Heterogeneous nuclear rnp K-like protein 2 (372 aa).

The span at 1–23 (MSDINDPNSISLPVGSSCTSRGA) shows a compositional bias: polar residues. Residues 1-49 (MSDINDPNSISLPVGSSCTSRGASTETFTTSRSTTLFSSQQESKDEGNV) are disordered. Residues 24 to 39 (STETFTTSRSTTLFSS) are compositionally biased toward low complexity. KH domains lie at 59-123 (TINH…LGQI), 167-232 (IGTS…LLQI), and 283-354 (EFKA…ESML).

It belongs to the HEK2 family. Binds RNA.

The protein localises to the cytoplasm. It localises to the P-body. The protein resides in the nucleus. Its subcellular location is the chromosome. It is found in the telomere. In terms of biological role, RNA-binding protein involved in the correct localization of transcripts in the cell. RNA localization is a widespread mechanism for achieving localized protein synthesis. Involved in structural and functional organization of telomeric chromatin and regulates silencing at the HMR locus. The sequence is that of Heterogeneous nuclear rnp K-like protein 2 (HEK2) from Zygosaccharomyces rouxii (strain ATCC 2623 / CBS 732 / NBRC 1130 / NCYC 568 / NRRL Y-229).